The primary structure comprises 352 residues: N-acetyl-gamma-glutamyl-phosphate reductase (352 aa).

Residue C155 is part of the active site.

It belongs to the NAGSA dehydrogenase family. Type 1 subfamily.

The protein localises to the cytoplasm. It catalyses the reaction N-acetyl-L-glutamate 5-semialdehyde + phosphate + NADP(+) = N-acetyl-L-glutamyl 5-phosphate + NADPH + H(+). The protein operates within amino-acid biosynthesis; L-arginine biosynthesis; N(2)-acetyl-L-ornithine from L-glutamate: step 3/4. Functionally, catalyzes the NADPH-dependent reduction of N-acetyl-5-glutamyl phosphate to yield N-acetyl-L-glutamate 5-semialdehyde. In Brachyspira hyodysenteriae (strain ATCC 49526 / WA1), this protein is N-acetyl-gamma-glutamyl-phosphate reductase.